Consider the following 146-residue polypeptide: UPF0756 membrane protein PTH_1817 (146 aa).

A run of 4 helical transmembrane segments spans residues 6–26 (LLIG…ILLI), 46–66 (MGLT…KASW), 69–89 (IISS…ALAT), and 105–125 (IVFG…GIPV).

This sequence belongs to the UPF0756 family.

The protein localises to the cell membrane. The sequence is that of UPF0756 membrane protein PTH_1817 from Pelotomaculum thermopropionicum (strain DSM 13744 / JCM 10971 / SI).